A 390-amino-acid chain; its full sequence is Serine/threonine/tyrosine-protein kinase HT1 (390 aa).

Residues 86–359 (LFIGNKFASG…GLPLTSHASL (274 aa)) form the Protein kinase domain. Residues 92–100 (FASGAHSRI) and Lys-113 each bind ATP. The Proton acceptor role is filled by Asp-212.

The protein belongs to the protein kinase superfamily. Ser/Thr protein kinase family. As to quaternary structure, interacts with DTX56. Binds to MPK4 and MPK12. Associates to CBC1 and CBC2. Post-translationally, autophosphorylated. As to expression, mainly localizes in guard cells. Expressed at low level in leaves, stems, roots and flowers.

The protein localises to the cell membrane. The enzyme catalyses L-seryl-[protein] + ATP = O-phospho-L-seryl-[protein] + ADP + H(+). It carries out the reaction L-threonyl-[protein] + ATP = O-phospho-L-threonyl-[protein] + ADP + H(+). It catalyses the reaction L-tyrosyl-[protein] + ATP = O-phospho-L-tyrosyl-[protein] + ADP + H(+). With respect to regulation, inhibited by MPK4 and MPK12. Its function is as follows. Serine/threonine/tyrosine kinase involved in the control of stomatal movement in response to CO(2). Functions as a major negative regulator of CO(2)-induced stomatal closing. Does not seem to be involved in stomatal closure in response to abscisic acid (ABA) or light. Involved in the control of red light-induced stomatal opening. Is epistatic to SRK2E/OST1 function during stomatal responses to red light and altered CO(2). Phosphorylates SRK2E/OST1 and GHR1 to prevents SRK2E/OST1- and GHR1-induced activation of SLAC1, thus preventing stomatal closure. Mediates the phosphorylation of CBC1 and CBC2. This is Serine/threonine/tyrosine-protein kinase HT1 from Arabidopsis thaliana (Mouse-ear cress).